The following is a 58-amino-acid chain: U-scoloptoxin(14)-Sa1a (58 aa).

The N-terminal stretch at Met1–Ala18 is a signal peptide.

It belongs to the scoloptoxin-14 family. Post-translationally, contains 4 disulfide bonds. As to expression, expressed by the venom gland.

It localises to the secreted. The protein is U-scoloptoxin(14)-Sa1a of Scolopendra alternans (Florida Keys giant centipede).